A 375-amino-acid polypeptide reads, in one-letter code: Coproporphyrin III ferrochelatase (375 aa).

Positions 59 and 128 each coordinate Fe-coproporphyrin III. Fe(2+) is bound by residues histidine 191 and glutamate 286.

Belongs to the ferrochelatase family.

Its subcellular location is the cytoplasm. It carries out the reaction Fe-coproporphyrin III + 2 H(+) = coproporphyrin III + Fe(2+). The protein operates within porphyrin-containing compound metabolism; protoheme biosynthesis. Involved in coproporphyrin-dependent heme b biosynthesis. Catalyzes the insertion of ferrous iron into coproporphyrin III to form Fe-coproporphyrin III. In Streptomyces coelicolor (strain ATCC BAA-471 / A3(2) / M145), this protein is Coproporphyrin III ferrochelatase.